We begin with the raw amino-acid sequence, 387 residues long: 1-deoxy-D-xylulose 5-phosphate reductoisomerase (387 aa).

Positions 11, 12, 13, 14, 37, 39, and 123 each coordinate NADPH. A 1-deoxy-D-xylulose 5-phosphate-binding site is contributed by Lys-124. Glu-125 is an NADPH binding site. Position 147 (Asp-147) interacts with Mn(2+). The 1-deoxy-D-xylulose 5-phosphate site is built by Ser-148, Glu-149, Ser-173, and His-196. Residue Glu-149 participates in Mn(2+) binding. Gly-202 contacts NADPH. Residues Ser-209, Asn-214, Lys-215, and Glu-218 each coordinate 1-deoxy-D-xylulose 5-phosphate. Residue Glu-218 participates in Mn(2+) binding.

It belongs to the DXR family. Mg(2+) serves as cofactor. Requires Mn(2+) as cofactor.

The catalysed reaction is 2-C-methyl-D-erythritol 4-phosphate + NADP(+) = 1-deoxy-D-xylulose 5-phosphate + NADPH + H(+). It functions in the pathway isoprenoid biosynthesis; isopentenyl diphosphate biosynthesis via DXP pathway; isopentenyl diphosphate from 1-deoxy-D-xylulose 5-phosphate: step 1/6. Its function is as follows. Catalyzes the NADPH-dependent rearrangement and reduction of 1-deoxy-D-xylulose-5-phosphate (DXP) to 2-C-methyl-D-erythritol 4-phosphate (MEP). This is 1-deoxy-D-xylulose 5-phosphate reductoisomerase from Corynebacterium diphtheriae (strain ATCC 700971 / NCTC 13129 / Biotype gravis).